The primary structure comprises 259 residues: Type III pantothenate kinase (259 aa).

6–13 provides a ligand contact to ATP; the sequence is DCGNTNTV. 107-110 serves as a coordination point for substrate; sequence GPDR. D109 acts as the Proton acceptor in catalysis. A K(+)-binding site is contributed by D129. T132 provides a ligand contact to ATP. T184 contributes to the substrate binding site.

The protein belongs to the type III pantothenate kinase family. As to quaternary structure, homodimer. Requires NH4(+) as cofactor. It depends on K(+) as a cofactor.

It localises to the cytoplasm. The enzyme catalyses (R)-pantothenate + ATP = (R)-4'-phosphopantothenate + ADP + H(+). Its pathway is cofactor biosynthesis; coenzyme A biosynthesis; CoA from (R)-pantothenate: step 1/5. Catalyzes the phosphorylation of pantothenate (Pan), the first step in CoA biosynthesis. The protein is Type III pantothenate kinase of Jannaschia sp. (strain CCS1).